A 163-amino-acid chain; its full sequence is Nucleotide-binding protein BLi01194 (163 aa).

It belongs to the YajQ family.

Its function is as follows. Nucleotide-binding protein. This is Nucleotide-binding protein BLi01194 from Bacillus licheniformis (strain ATCC 14580 / DSM 13 / JCM 2505 / CCUG 7422 / NBRC 12200 / NCIMB 9375 / NCTC 10341 / NRRL NRS-1264 / Gibson 46).